The chain runs to 949 residues: Thrombospondin-4-B (949 aa).

Residues 1–22 (MAGTMHLLTAVSLILMLSSANA) form the signal peptide. The region spanning 23 to 198 (ESTVYNLLTS…LEELKLAYGD (176 aa)) is the Laminin G-like domain. Cystine bridges form between Cys276–Cys287, Cys281–Cys296, Cys299–Cys310, Cys316–Cys327, Cys321–Cys336, Cys339–Cys363, Cys369–Cys383, Cys377–Cys392, Cys395–Cys407, Cys413–Cys427, Cys421–Cys437, Cys439–Cys450, Cys466–Cys471, Cys476–Cys496, Cys512–Cys532, Cys535–Cys555, Cys571–Cys591, Cys594–Cys614, Cys632–Cys652, Cys672–Cys692, and Cys708–Cys929. The EGF-like 1; calcium-binding domain occupies 312–349 (DVDECQFNPCFPGVRCVNMAPGFRCEACPLGFTGKPLE). The EGF-like 2; calcium-binding domain occupies 365-408 (DIDECKGPDNGGCTANSICVNSVGSYQCGRCKTGFTGDQIRGCK). The region spanning 409 to 451 (PEKSCGNRLQNPCDPNAQCTEERDGTITCQCGIGWAGNGYLCG) is the EGF-like 3 domain. TSP type-3 repeat units lie at residues 452-484 (KDTDIDGYPDERLRCRDPTCRKDNCVTVPNSGQ), 485-520 (EDADGDGKGDACDPDADGDGILNEQDNCWLTPNINQ), 521-543 (QNSDKDSHGDACDNCVRVDNPDQ), 544-579 (RDTDSDGLGDACDDDMDGDGLKNFLDNCQRVKNRDQ), 580-602 (LDRDGDGVGDACDSCPDIPNPNQ), 603-640 (SDIDNDLVGDSCDTNQDSDGDGHQDSKDNCPMVINSSQ), 641-680 (LDTDKDGIGDECDDDDDNDGIPDSLPPGPDNCRLVPNPEQ), and 681-716 (IDDNNDGVGDICESDFDQDKVIDRIDNCPENAEITL). Positions 578–671 (DQLDRDGDGV…PDSLPPGPDN (94 aa)) are disordered. Residues Asn601 and Asn637 are each glycosylated (N-linked (GlcNAc...) asparagine). The segment covering 649–660 (GDECDDDDDNDG) has biased composition (acidic residues). The region spanning 720–934 (RAYQTVVLDP…LKYRCNDTIP (215 aa)) is the TSP C-terminal domain. Asn930 is a glycosylation site (N-linked (GlcNAc...) asparagine).

The protein belongs to the thrombospondin family. As to quaternary structure, homotrimer; disulfide-linked.

Its subcellular location is the endoplasmic reticulum. The protein localises to the sarcoplasmic reticulum. It localises to the secreted. The protein resides in the extracellular space. It is found in the extracellular matrix. In terms of biological role, adhesive glycoprotein that mediates cell-to-cell and cell-to-matrix interactions and may be involved in various processes including cellular proliferation, migration, adhesion and attachment. May play a role in ER stress response. The protein is Thrombospondin-4-B (thbs4b) of Danio rerio (Zebrafish).